The chain runs to 307 residues: Probable inactive peptidyl-prolyl cis-trans isomerase-like 6 (307 aa).

A PPIase cyclophilin-type domain is found at 141-304 (FLDISIDLYP…QNCVITASGQ (164 aa)).

Belongs to the cyclophilin-type PPIase family.

In terms of biological role, probable inactive PPIase with no peptidyl-prolyl cis-trans isomerase activity. This is Probable inactive peptidyl-prolyl cis-trans isomerase-like 6 from Bos taurus (Bovine).